Consider the following 510-residue polypeptide: Cytochrome P450 4A6 (510 aa).

Positions 1-4 are excised as a propeptide; that stretch reads MSVS. Heme is bound by residues Glu321 and Cys457.

This sequence belongs to the cytochrome P450 family. Requires heme as cofactor. In terms of tissue distribution, liver; kidney.

It localises to the endoplasmic reticulum membrane. Its subcellular location is the microsome membrane. The enzyme catalyses an omega-methyl-long-chain fatty acid + reduced [NADPH--hemoprotein reductase] + O2 = an omega-hydroxy-long-chain fatty acid + oxidized [NADPH--hemoprotein reductase] + H2O + H(+). Functionally, cytochromes P450 are a group of heme-thiolate monooxygenases. In liver microsomes, this enzyme is involved in an NADPH-dependent electron transport pathway. It oxidizes a variety of structurally unrelated compounds, including steroids, fatty acids, and xenobiotics. In terms of biological role, the kidney P-450 system is rather specialized for the omega-hydroxylation of fatty acids. Both P450-KA1 and P450-KA2 catalyze the omega- and (omega-1)-hydroxylation of various fatty acids with no drug-metabolizing activity, and hydroxylate prostaglandin A1 and A2 solely at the omega-position. The protein is Cytochrome P450 4A6 (CYP4A6) of Oryctolagus cuniculus (Rabbit).